The following is a 249-amino-acid chain: E3 ubiquitin-protein ligase RMA1 (249 aa).

An RING-type zinc finger spans residues Cys48–Lys97. The chain crosses the membrane as a helical; Anchor for type IV membrane protein span at residues Leu231 to Leu248.

As to expression, ubiquitous. Highly expressed in roots.

Its subcellular location is the endoplasmic reticulum membrane. The catalysed reaction is S-ubiquitinyl-[E2 ubiquitin-conjugating enzyme]-L-cysteine + [acceptor protein]-L-lysine = [E2 ubiquitin-conjugating enzyme]-L-cysteine + N(6)-ubiquitinyl-[acceptor protein]-L-lysine.. It functions in the pathway protein modification; protein ubiquitination. In terms of biological role, E3 ubiquitin-protein ligase that promotes the ubiquitination and proteasomal degradation of aquaporin PIP2-1. Forms a ubiquitin ligase complex in cooperation with the E2 enzymes UCB8/UCB10. The sequence is that of E3 ubiquitin-protein ligase RMA1 (RMA1) from Arabidopsis thaliana (Mouse-ear cress).